The following is a 480-amino-acid chain: Aromatic-L-amino-acid decarboxylase (480 aa).

Methionine 1 is subject to N-acetylmethionine. A run of 2 repeats spans residues lysine 58–glutamate 115 and methionine 118–alanine 178. Residues lysine 58–alanine 178 form a 2 X approximate tandem repeats region. Threonine 82 lines the substrate pocket. Pyridoxal 5'-phosphate is bound by residues alanine 148 and serine 149. Histidine 192 is a substrate binding site. Pyridoxal 5'-phosphate-binding residues include threonine 246 and asparagine 300. Lysine 303 bears the N6-(pyridoxal phosphate)lysine mark.

Belongs to the group II decarboxylase family. In terms of assembly, homodimer. Pyridoxal 5'-phosphate is required as a cofactor.

The enzyme catalyses L-dopa + H(+) = dopamine + CO2. It catalyses the reaction 5-hydroxy-L-tryptophan + H(+) = serotonin + CO2. Its pathway is catecholamine biosynthesis; dopamine biosynthesis; dopamine from L-tyrosine: step 2/2. Its function is as follows. Catalyzes the decarboxylation of L-3,4-dihydroxyphenylalanine (DOPA) to dopamine and L-5-hydroxytryptophan to serotonin. The protein is Aromatic-L-amino-acid decarboxylase (Ddc) of Mus musculus (Mouse).